The primary structure comprises 208 residues: Vacuolar iron transporter homolog 5 (208 aa).

The Cytoplasmic segment spans residues 1–41; it reads MAAMMNNERSSSNKLQVDAENPAAVGDELDLAARANWLRAA. A helical membrane pass occupies residues 42–62; it reads VLGANDGLVSTASLMLGVGAV. The Vacuolar portion of the chain corresponds to 63–69; sequence KAEARAM. A helical transmembrane segment spans residues 70 to 90; sequence VISGFAGLLAGACSMAIGEFV. Over 91–125 the chain is Cytoplasmic; it reads SVCSQRDVELAQLERDGKRGGEEEKALPSPAQAAA. A helical membrane pass occupies residues 126–146; that stretch reads ASAMAFSVGAVVPLLAAGFIV. Residues 147 to 151 lie on the Vacuolar side of the membrane; sequence NYRLR. The chain crosses the membrane as a helical span at residues 152-172; that stretch reads IAVVVAVASVALAAFGCVGAV. Residues 173–184 lie on the Cytoplasmic side of the membrane; the sequence is LGRAAVARSSAR. A helical membrane pass occupies residues 185 to 205; sequence VVLGGWAAMGITFGLMRLFKA. Residues 206–208 are Vacuolar-facing; it reads SGI.

This sequence belongs to the CCC1 family.

Its subcellular location is the vacuole membrane. The enzyme catalyses Fe(2+)(in) = Fe(2+)(out). Its function is as follows. Probable vacuolar iron transporter that may be involved in the regulation of iron distribution throughout the plant. The protein is Vacuolar iron transporter homolog 5 of Oryza sativa subsp. japonica (Rice).